The primary structure comprises 598 residues: Pentatricopeptide repeat-containing protein At5g14820, mitochondrial (598 aa).

Residues 1–98 (MAAAPWLYLS…RGFSSGSSNV (98 aa)) constitute a mitochondrion transit peptide. PPR repeat units follow at residues 193–227 (DSRT…GLLT), 229–261 (ETFT…KFKI), 262–292 (GVET…LKER), 296–330 (NMMT…GLKP), 331–365 (DIVA…GPCP), 366–400 (NVRS…GLQP), 401–435 (DAAV…GHPP), 436–470 (DGKT…EIEP), 471–505 (SIHT…GICP), and 506–540 (DDNS…GMKT).

Belongs to the PPR family. P subfamily.

It is found in the mitochondrion. This is Pentatricopeptide repeat-containing protein At5g14820, mitochondrial from Arabidopsis thaliana (Mouse-ear cress).